Reading from the N-terminus, the 248-residue chain is MAGHSKWANIKHKKAKEDAKRGKIFTKIIRELVSATKQGDPDPESNPRLRAAVEKALSANMTKDTIKRAIERGAGNSDGGEMDELTYEGYGVGGVAVLVETMTDNVNRTVSEVRHAFTKFSGNLGTAGSVAYLFTKRGEIIFDDVSLEDEIMLVALDAGAVDIENDGESLLVITEPDTFGAVKDALDAAGYESSNAEVTMSPSTTALIDNIDDAEKVMKMIDMLEDLDDVQDVHTNVDFTDDVLAQLG.

This sequence belongs to the TACO1 family.

It localises to the cytoplasm. This chain is Probable transcriptional regulatory protein PsycPRwf_1013, found in Psychrobacter sp. (strain PRwf-1).